A 75-amino-acid polypeptide reads, in one-letter code: CDC42 small effector protein 2-C (75 aa).

Residues Cys10 and Cys11 are each lipidated (S-palmitoyl cysteine). The region spanning 29 to 42 (IGEPMNFVHTAHVG) is the CRIB domain.

Belongs to the CDC42SE/SPEC family.

The protein resides in the cytoplasm. It is found in the cytoskeleton. The protein localises to the cell membrane. Functionally, probably involved in the organization of the actin cytoskeleton by acting downstream of CDC42, inducing actin filament assembly. This chain is CDC42 small effector protein 2-C (cdc42se2-c), found in Xenopus laevis (African clawed frog).